We begin with the raw amino-acid sequence, 238 residues long: 1-(5-phosphoribosyl)-5-[(5-phosphoribosylamino)methylideneamino] imidazole-4-carboxamide isomerase (238 aa).

The active-site Proton acceptor is Asp-8. Residue Asp-129 is the Proton donor of the active site.

The protein belongs to the HisA/HisF family.

It is found in the cytoplasm. The catalysed reaction is 1-(5-phospho-beta-D-ribosyl)-5-[(5-phospho-beta-D-ribosylamino)methylideneamino]imidazole-4-carboxamide = 5-[(5-phospho-1-deoxy-D-ribulos-1-ylimino)methylamino]-1-(5-phospho-beta-D-ribosyl)imidazole-4-carboxamide. It functions in the pathway amino-acid biosynthesis; L-histidine biosynthesis; L-histidine from 5-phospho-alpha-D-ribose 1-diphosphate: step 4/9. In Myxococcus xanthus (strain DK1622), this protein is 1-(5-phosphoribosyl)-5-[(5-phosphoribosylamino)methylideneamino] imidazole-4-carboxamide isomerase.